We begin with the raw amino-acid sequence, 525 residues long: GMP synthase [glutamine-hydrolyzing] (525 aa).

One can recognise a Glutamine amidotransferase type-1 domain in the interval Thr12–Ser203. The Nucleophile role is filled by Cys89. Residues His177 and Glu179 contribute to the active site. The GMPS ATP-PPase domain occupies Trp204–Arg399. Ser231 to Ala237 serves as a coordination point for ATP.

Homodimer.

The catalysed reaction is XMP + L-glutamine + ATP + H2O = GMP + L-glutamate + AMP + diphosphate + 2 H(+). The protein operates within purine metabolism; GMP biosynthesis; GMP from XMP (L-Gln route): step 1/1. Catalyzes the synthesis of GMP from XMP. The polypeptide is GMP synthase [glutamine-hydrolyzing] (Streptomyces avermitilis (strain ATCC 31267 / DSM 46492 / JCM 5070 / NBRC 14893 / NCIMB 12804 / NRRL 8165 / MA-4680)).